A 997-amino-acid chain; its full sequence is Kinesin-like protein KIF19 (997 aa).

One can recognise a Kinesin motor domain in the interval 11–346 (QLMVALRVRP…LTYAGRAKNI (336 aa)). 104-111 (GPTGCGKT) is a binding site for ATP. A coiled-coil region spans residues 361–388 (IAQYTSIIADLRGEIQRLKCKIDQQAGR). A compositionally biased stretch (basic and acidic residues) spans 477-494 (EERRKESYTKEDSEKDSD). 4 disordered regions span residues 477-509 (EERR…EVAS), 665-704 (KITP…GTDS), 718-759 (QVKS…SSEN), and 784-997 (AAQR…LQHN). A coiled-coil region spans residues 506 to 551 (EVASARENIAALVGEQKKLRKEKLALEQRCRELRARGRRLEETLPR). Polar residues predominate over residues 683 to 697 (KTLSSEAQRPQNNTL). Residues 750–759 (INSSPESSEN) are compositionally biased toward low complexity. 2 stretches are compositionally biased toward polar residues: residues 835 to 851 (TLQH…STGE) and 950 to 959 (PNQNTGSGNP).

It belongs to the TRAFAC class myosin-kinesin ATPase superfamily. Kinesin family. In terms of tissue distribution, strongly expressed in the oviduct and trachea. Expressed in testis, lung, ovary and brain.

It is found in the cytoplasm. It localises to the cytoskeleton. The protein resides in the cell projection. Its subcellular location is the cilium. Functionally, plus end-directed microtubule-dependent motor protein that regulates the length of motile cilia by mediating depolymerization of microtubules at ciliary tips. This is Kinesin-like protein KIF19 (Kif19) from Mus musculus (Mouse).